Consider the following 370-residue polypeptide: Histidinol-phosphate aminotransferase 3 (370 aa).

K233 carries the N6-(pyridoxal phosphate)lysine modification.

This sequence belongs to the class-II pyridoxal-phosphate-dependent aminotransferase family. Histidinol-phosphate aminotransferase subfamily. As to quaternary structure, homodimer. Pyridoxal 5'-phosphate serves as cofactor.

The catalysed reaction is L-histidinol phosphate + 2-oxoglutarate = 3-(imidazol-4-yl)-2-oxopropyl phosphate + L-glutamate. The protein operates within amino-acid biosynthesis; L-histidine biosynthesis; L-histidine from 5-phospho-alpha-D-ribose 1-diphosphate: step 7/9. The protein is Histidinol-phosphate aminotransferase 3 of Burkholderia lata (strain ATCC 17760 / DSM 23089 / LMG 22485 / NCIMB 9086 / R18194 / 383).